The chain runs to 773 residues: Histone-lysine N-methyltransferase mes-2 (773 aa).

Polar residues predominate over residues 1-13; that stretch reads MSNSEPSTSTPSG. The interval 1–33 is disordered; it reads MSNSEPSTSTPSGKTKKRGKKCETSMGKSKKSK. An interaction with mes-6 region spans residues 1 to 194; that stretch reads MSNSEPSTST…TPDQLRLTHM (194 aa). The CXC domain maps to 505–614; sequence IREDDMRDSQ…SNIIKCRNFG (110 aa). The SET domain occupies 616-737; it reads TRMIQKRTYC…ISEELTFDYS (122 aa). A disordered region spans residues 749-773; the sequence is VQTKERSEKPSRPKSQKLSKPMTSE. A compositionally biased stretch (basic and acidic residues) spans 750-759; the sequence is QTKERSEKPS.

It belongs to the class V-like SAM-binding methyltransferase superfamily. Histone-lysine methyltransferase family. EZ subfamily. In terms of assembly, interacts directly with mes-6 via its N-terminal domain. Forms a heterotrimeric complex with mes-3 and mes-6. Does not interact with mes-4. In adults, it is predominantly expressed in the germline, and weakly expressed in intestinal cells. Expressed in the hypoderm.

The protein localises to the nucleus. It carries out the reaction L-lysyl(27)-[histone H3] + 3 S-adenosyl-L-methionine = N(6),N(6),N(6)-trimethyl-L-lysyl(27)-[histone H3] + 3 S-adenosyl-L-homocysteine + 3 H(+). In terms of biological role, polycomb group (PcG) protein. Catalytic subunit of a the mes-2/mes-3/mes-6 complex, which methylates 'Lys-27' of histone H3, leading to transcriptional repression of the affected target genes. PcG proteins act by forming multiprotein complexes, which are required to maintain the transcriptionally repressive state of homeotic genes throughout development. In association with the nfya-1-NF-Y complex, may play a role in repressing the expression of the homeobox protein egl-5 in tissues such as the head. PcG proteins are not required to initiate repression, but to maintain it during later stages of development. The mes-2/mes-3/mes-6 complex may participate in the global inactivation of the X chromosomes in germline cells. This complex is required to exclude mes-4 from the inactivated X-chromosomes in germline cells. Required for small-RNA-induced H3K27 trimethylation. Involved in the negative regulation of lifespan in a germline-independent fashion. The polypeptide is Histone-lysine N-methyltransferase mes-2 (Caenorhabditis elegans).